A 485-amino-acid polypeptide reads, in one-letter code: 2-succinylbenzoate--CoA ligase (485 aa).

It belongs to the ATP-dependent AMP-binding enzyme family. MenE subfamily.

It catalyses the reaction 2-succinylbenzoate + ATP + CoA = 2-succinylbenzoyl-CoA + AMP + diphosphate. It participates in quinol/quinone metabolism; 1,4-dihydroxy-2-naphthoate biosynthesis; 1,4-dihydroxy-2-naphthoate from chorismate: step 5/7. It functions in the pathway quinol/quinone metabolism; menaquinone biosynthesis. In terms of biological role, converts 2-succinylbenzoate (OSB) to 2-succinylbenzoyl-CoA (OSB-CoA). The sequence is that of 2-succinylbenzoate--CoA ligase from Enterococcus faecalis (strain ATCC 700802 / V583).